The sequence spans 384 residues: Succinyl-diaminopimelate desuccinylase (384 aa).

Histidine 71 is a Zn(2+) binding site. The active site involves aspartate 73. Residue aspartate 104 participates in Zn(2+) binding. Glutamate 139 acts as the Proton acceptor in catalysis. Zn(2+)-binding residues include glutamate 140, glutamate 168, and histidine 357.

The protein belongs to the peptidase M20A family. DapE subfamily. As to quaternary structure, homodimer. Requires Zn(2+) as cofactor. Co(2+) serves as cofactor.

The enzyme catalyses N-succinyl-(2S,6S)-2,6-diaminopimelate + H2O = (2S,6S)-2,6-diaminopimelate + succinate. Its pathway is amino-acid biosynthesis; L-lysine biosynthesis via DAP pathway; LL-2,6-diaminopimelate from (S)-tetrahydrodipicolinate (succinylase route): step 3/3. Functionally, catalyzes the hydrolysis of N-succinyl-L,L-diaminopimelic acid (SDAP), forming succinate and LL-2,6-diaminopimelate (DAP), an intermediate involved in the bacterial biosynthesis of lysine and meso-diaminopimelic acid, an essential component of bacterial cell walls. The chain is Succinyl-diaminopimelate desuccinylase from Bradyrhizobium sp. (strain ORS 278).